Reading from the N-terminus, the 264-residue chain is Small ribosomal subunit protein uS2 (264 aa).

It belongs to the universal ribosomal protein uS2 family.

In Helicobacter pylori (strain Shi470), this protein is Small ribosomal subunit protein uS2.